The primary structure comprises 773 residues: Leucine-rich repeat-containing protein let-4 (773 aa).

The signal sequence occupies residues 1 to 20; the sequence is MRLLLCLLLFSTLLINSTNA. Residues 21 to 689 lie on the Extracellular side of the membrane; sequence CPGVITQACF…RLEKSFFTTT (669 aa). 16 LRR repeats span residues 61–84, 85–107, 109–132, 133–157, 159–181, 183–206, 207–230, 231–254, 256–278, 279–302, 303–326, 328–349, 350–373, 375–397, 399–421, and 486–516; these read VGLIQSLTMNQAELVELPPNFFSG, LFIRRLDLSQNKIKKIDDAAFAG, NPVLEEVVLNHNLIEKVPAAALAG, LPNLLRLDLSNNSIVEIQEQEIFPN, NKLYDINLGSNKIFSIHTSTFQN, KNSIQTINLGHNNMTAVPSSAIRG, LKQLQSLHLHKNRIEQLDALNFLN, LPVLNLLNLAGNQIHELNRQAFLN, PSLRYLYLSGNKITKLTAYQFQT, FEQLEMLDLTNNEIGAIPANSLSG, LKQLRQLYLAHNKISNISSNAFTN, SIVVLVLSSNELKTLTAGIISG, LPNLQQVSFRDNQIKTINRNAFYD, ASLVMLDLAKNQLTEIAPTTFLA, LNLLLVDLSENKLPKTPYSAFNS, and LVQIPKMQIHRNVHTTTGDQAPQIPSGAFQQ. Residues 690–710 traverse the membrane as a helical segment; that stretch reads IIFICVGTAVIVLVVVIAGLC. Residues 711-773 lie on the Cytoplasmic side of the membrane; the sequence is ISKHRQLQFE…PGSSYCNYYK (63 aa).

As to expression, in L1 larvae, expressed in a subset of epithelial cells including epidermal, vulval and rectal cells and the excretory duct and pore. Absent from internal epithelia such as the gut and pharyngeal tubes. Transiently expressed in the excretory canal cell at the 1.5-fold embryonic stage but no longer visible in this cell at hatching.

The protein localises to the apical cell membrane. Required for apical extracellular matrix organization and epithelial junction maintenance. This chain is Leucine-rich repeat-containing protein let-4 (let-4), found in Caenorhabditis elegans.